Here is a 63-residue protein sequence, read N- to C-terminus: Trypsin inhibitor 5 (63 aa).

A signal peptide spans 1–21 (MASVAESSGVVEVIELISDGG). A propeptide spanning residues 22 to 34 (NDLPRKIMSGRHG) is cleaved from the precursor. 3 disulfides stabilise this stretch: Cys37–Cys54, Cys44–Cys56, and Cys50–Cys62.

This sequence belongs to the protease inhibitor I7 (squash-type serine protease inhibitor) family.

The protein resides in the secreted. Its function is as follows. Inhibits trypsin. The protein is Trypsin inhibitor 5 of Luffa aegyptiaca (Sponge gourd).